The primary structure comprises 532 residues: All-trans-retinyl ester 13-cis isomerohydrolase (532 aa).

Cys112 carries the S-palmitoyl cysteine; in membrane form lipid modification. His180, His241, and His313 together coordinate Fe cation. Residue Cys329 is the site of S-palmitoyl cysteine; in membrane form attachment. Position 527 (His527) interacts with Fe cation.

Belongs to the carotenoid oxygenase family. Fe(2+) is required as a cofactor. In terms of processing, palmitoylated. In terms of tissue distribution, predominantly expressed in brain. Expressed at a low level in the eye.

The protein localises to the cytoplasm. It is found in the cell membrane. The catalysed reaction is an all-trans-retinyl ester + H2O = 13-cis-retinol + a fatty acid + H(+). It carries out the reaction lutein = (3R,3'S)-zeaxanthin. In terms of biological role, specifically generates 13-cis retinol, a stereoisomeric form of retinoic acid. Capable of catalyzing the isomerization of lutein to meso-zeaxanthin an eye-specific carotenoid. This is All-trans-retinyl ester 13-cis isomerohydrolase (rpe65b) from Danio rerio (Zebrafish).